The primary structure comprises 340 residues: Glyceraldehyde-3-phosphate dehydrogenase (340 aa).

Residues Thr11–Ile12 and Gly109 each bind NAD(+). D-glyceraldehyde 3-phosphate is bound at residue Ser138–Asn140. Cys139 (nucleophile) is an active-site residue. NAD(+) is bound at residue Arg167. Residue His193 to Ala194 participates in D-glyceraldehyde 3-phosphate binding. Position 300 (Gln300) interacts with NAD(+).

It belongs to the glyceraldehyde-3-phosphate dehydrogenase family. As to quaternary structure, homotetramer.

Its subcellular location is the cytoplasm. It carries out the reaction D-glyceraldehyde 3-phosphate + phosphate + NADP(+) = (2R)-3-phospho-glyceroyl phosphate + NADPH + H(+). The enzyme catalyses D-glyceraldehyde 3-phosphate + phosphate + NAD(+) = (2R)-3-phospho-glyceroyl phosphate + NADH + H(+). Its pathway is carbohydrate degradation; glycolysis; pyruvate from D-glyceraldehyde 3-phosphate: step 1/5. This chain is Glyceraldehyde-3-phosphate dehydrogenase, found in Saccharolobus islandicus (strain L.S.2.15 / Lassen #1) (Sulfolobus islandicus).